The following is a 498-amino-acid chain: Acetyl-coenzyme A carboxylase carboxyl transferase subunit beta, chloroplastic (498 aa).

The CoA carboxyltransferase N-terminal domain occupies 228–498 (LWVQCEICYG…LNHNLSRTLT (271 aa)). 4 residues coordinate Zn(2+): C232, C235, C251, and C254. The C4-type zinc-finger motif lies at 232–254 (CEICYGLNYKKFFKSKMNICEQC).

The protein belongs to the AccD/PCCB family. As to quaternary structure, acetyl-CoA carboxylase is a heterohexamer composed of biotin carboxyl carrier protein, biotin carboxylase and 2 subunits each of ACCase subunit alpha and ACCase plastid-coded subunit beta (accD). The cofactor is Zn(2+).

It is found in the plastid. It localises to the chloroplast stroma. The catalysed reaction is N(6)-carboxybiotinyl-L-lysyl-[protein] + acetyl-CoA = N(6)-biotinyl-L-lysyl-[protein] + malonyl-CoA. The protein operates within lipid metabolism; malonyl-CoA biosynthesis; malonyl-CoA from acetyl-CoA: step 1/1. In terms of biological role, component of the acetyl coenzyme A carboxylase (ACC) complex. Biotin carboxylase (BC) catalyzes the carboxylation of biotin on its carrier protein (BCCP) and then the CO(2) group is transferred by the transcarboxylase to acetyl-CoA to form malonyl-CoA. This chain is Acetyl-coenzyme A carboxylase carboxyl transferase subunit beta, chloroplastic, found in Populus alba (White poplar).